A 114-amino-acid polypeptide reads, in one-letter code: Hydrogenase maturation factor HypA (114 aa).

Position 2 (His2) interacts with Ni(2+). Zn(2+)-binding residues include Cys70, Cys73, Cys86, and Cys89.

The protein belongs to the HypA/HybF family.

Functionally, involved in the maturation of [NiFe] hydrogenases. Required for nickel insertion into the metal center of the hydrogenase. This Trichodesmium erythraeum (strain IMS101) protein is Hydrogenase maturation factor HypA.